The sequence spans 393 residues: MESFLFTSESVNEGHPDKLCDQISDAILDACLEQDPESKVACETCTKTNMVMVFGEITTKANVDYEKIVRETCREIGFISDDVGLDADNCKVLVNIEQQSPDIAQGVHGHLTKKPEEIGAGDQGHMFGYATDETPELMPLSHVLATKLGAKLTEVRKNGTCAWLRPDGKTQVTVEYFNENGAMVPVRVHTVLISTQHDETVTNDEIAADLKEHVIKPVIPEKYLDEKTIFHLNPSGRFVIGGPHGDAGLTGRKIIIDTYGGWGAHGGGAFSGKDPTKVDRSGAYIVRQAAKSIVASGLARRCIVQVSYAIGVPEPLSVFVDSYGTGKIPDKEILEIVKESFDFRPGMISINLDLKRGGNGRFLKTAAYGHFGRDDADFTWEVVKPLKSNKVQA.

Glu9 lines the Mg(2+) pocket. His15 contacts ATP. Residue Glu43 participates in K(+) binding. Glu56 and Gln99 together coordinate L-methionine. Residues 167 to 169, 235 to 238, Asp246, 252 to 253, Ala269, Lys273, and Lys277 each bind ATP; these read DGK, SGRF, and RK. An L-methionine-binding site is contributed by Asp246. An L-methionine-binding site is contributed by Lys277.

Belongs to the AdoMet synthase family. As to quaternary structure, homotetramer. Mn(2+) is required as a cofactor. Mg(2+) serves as cofactor. The cofactor is Co(2+). Requires K(+) as cofactor. In terms of tissue distribution, mostly expressed in flowers, seedpods and roots, and, to a lower extent, in stems and leaves.

The protein resides in the cytoplasm. It carries out the reaction L-methionine + ATP + H2O = S-adenosyl-L-methionine + phosphate + diphosphate. It functions in the pathway amino-acid biosynthesis; S-adenosyl-L-methionine biosynthesis; S-adenosyl-L-methionine from L-methionine: step 1/1. In terms of biological role, catalyzes the formation of S-adenosylmethionine from methionine and ATP. The reaction comprises two steps that are both catalyzed by the same enzyme: formation of S-adenosylmethionine (AdoMet) and triphosphate, and subsequent hydrolysis of the triphosphate. This is S-adenosylmethionine synthase 2 (MSAMS2) from Brassica juncea (Indian mustard).